Here is a 1234-residue protein sequence, read N- to C-terminus: DNA-directed RNA polymerase I subunit RPA2 (1234 aa).

Residues 1119 to 1150 form a C4-type zinc finger; the sequence is CRQCGSFLSTQPTVSPFIGKRKAVSTVRCRNC.

Belongs to the RNA polymerase beta chain family. In terms of assembly, component of the RNA polymerase I (Pol I) complex consisting of 14 subunits.

The protein resides in the nucleus. It is found in the nucleolus. The catalysed reaction is RNA(n) + a ribonucleoside 5'-triphosphate = RNA(n+1) + diphosphate. Functionally, DNA-dependent RNA polymerase catalyzes the transcription of DNA into RNA using the four ribonucleoside triphosphates as substrates. Second largest core component of RNA polymerase I which synthesizes ribosomal RNA precursors. Proposed to contribute to the polymerase catalytic activity and forms the polymerase active center together with the largest subunit. Pol I is composed of mobile elements and RPA2 is part of the core element with the central large cleft and probably a clamp element that moves to open and close the cleft. This chain is DNA-directed RNA polymerase I subunit RPA2 (acr-2), found in Neurospora crassa (strain ATCC 24698 / 74-OR23-1A / CBS 708.71 / DSM 1257 / FGSC 987).